The following is a 113-amino-acid chain: Mitochondrial import inner membrane translocase subunit TIM14 (113 aa).

The Mitochondrial intermembrane portion of the chain corresponds to 1-4; that stretch reads MATP. Residues 5 to 22 traverse the membrane as a helical segment; sequence IIVGATIAGIAYSSRFLI. Residues 23-113 lie on the Mitochondrial matrix side of the membrane; that stretch reads RVIQRAKSKQ…RNVLSSKNSN (91 aa). Positions 59–113 constitute a J domain; it reads EAANILGLKEESTKEEIKIRHKLLMIKNHPDKGGSSYLATKINEARNVLSSKNSN.

The protein belongs to the TIM14 family. In terms of assembly, interacts with PHB2; the interaction associates DNAJC19 with the prohibitin complex. Interacts with TIMM16/PAM16. May be a component of the PAM complex at least composed of a mitochondrial HSP70 protein, GRPEL1 or GRPEL2, TIMM44, TIMM16/PAM16 and TIMM14/DNAJC19.

It is found in the mitochondrion inner membrane. In terms of biological role, mitochondrial co-chaperone which forms a complex with prohibitins to regulate cardiolipin remodeling. May be a component of the PAM complex, a complex required for the translocation of transit peptide-containing proteins from the inner membrane into the mitochondrial matrix in an ATP-dependent manner. May act as a co-chaperone that stimulate the ATP-dependent activity. The sequence is that of Mitochondrial import inner membrane translocase subunit TIM14 (dnajc19) from Dictyostelium discoideum (Social amoeba).